Reading from the N-terminus, the 188-residue chain is Ribosome-recycling factor (188 aa).

This sequence belongs to the RRF family.

Its subcellular location is the cytoplasm. Responsible for the release of ribosomes from messenger RNA at the termination of protein biosynthesis. May increase the efficiency of translation by recycling ribosomes from one round of translation to another. In Cereibacter sphaeroides (strain ATCC 17023 / DSM 158 / JCM 6121 / CCUG 31486 / LMG 2827 / NBRC 12203 / NCIMB 8253 / ATH 2.4.1.) (Rhodobacter sphaeroides), this protein is Ribosome-recycling factor.